Consider the following 198-residue polypeptide: Putative coiled-coil domain-containing protein 196 (198 aa).

Positions 24 to 117 (NYLKELNEDL…RKEMEMLWNK (94 aa)) form a coiled coil. 2 stretches are compositionally biased toward basic and acidic residues: residues 135-144 (NKTDLQDGKA) and 154-167 (TKNELETLCAEKGK). The segment at 135–198 (NKTDLQDGKA…VSGTSQHHSE (64 aa)) is disordered. Over residues 187 to 198 (GQVSGTSQHHSE) the composition is skewed to polar residues.

This chain is Putative coiled-coil domain-containing protein 196, found in Bos taurus (Bovine).